The following is a 100-amino-acid chain: Vesicle-associated membrane protein 8 (100 aa).

Met1 carries the post-translational modification N-acetylmethionine. Topologically, residues 1 to 75 (MEEASEGGGN…ARKFWWKNVK (75 aa)) are cytoplasmic. Phosphoserine occurs at positions 5 and 18. The v-SNARE coiled-coil homology domain occupies 12–72 (RVRNLQSEVE…QKVARKFWWK (61 aa)). Phosphothreonine is present on residues Thr28, Thr48, and Thr54. Ser55 is subject to Phosphoserine. 2 (Microbial infection) N6-stearoyl lysine lipidation sites follow: Lys64 and Lys68. A helical; Anchor for type IV membrane protein transmembrane segment spans residues 76-96 (MIVLICVIVFIIILFIVLFAT). The Vesicular portion of the chain corresponds to 97-100 (GAFS).

Belongs to the synaptobrevin family. Forms a SNARE complex composed of VAMP8, SNAP29 and STX17 involved in fusion of autophagosome with lysosome. Found in a number of SNARE complexes with NAPA, SNAP23, SNAP25, STX1A, STX4, STX7, STX8 and VTI1B. Interacts with PICALM. SNARE complex formation and binding by PICALM are mutually exclusive processes for VAMP8. Interacts with SBF2/MTMR13. Interacts with RAB21 (in GTP-bound form) in response to starvation; the interaction probably regulates VAMP8 endolysosomal trafficking. Interacts with STX17; this interaction is increased in the absence of TMEM39A. Interacts with TRIM6. As to quaternary structure, (Microbial infection) The interaction with STX17 is decreased in presence of SARS coronavirus-2/SARS-CoV-2 ORF3A protein. Post-translationally, (Microbial infection) Stearoylated By S.flexneri N-epsilon-fatty acyltransferase IcsB, thereby disrupting the host actin cytoskeleton. In terms of tissue distribution, platelets.

It is found in the lysosome membrane. It localises to the early endosome membrane. Its subcellular location is the late endosome membrane. The protein localises to the cell membrane. The protein resides in the zymogen granule membrane. Functionally, SNAREs, soluble N-ethylmaleimide-sensitive factor-attachment protein receptors, are essential proteins for fusion of cellular membranes. SNAREs localized on opposing membranes assemble to form a trans-SNARE complex, an extended, parallel four alpha-helical bundle that drives membrane fusion. VAMP8 is a SNARE involved in autophagy through the direct control of autophagosome membrane fusion with the lysososome membrane via its interaction with the STX17-SNAP29 binary t-SNARE complex. Also required for dense-granule secretion in platelets. Also plays a role in regulated enzyme secretion in pancreatic acinar cells. Involved in the abscission of the midbody during cell division, which leads to completely separate daughter cells. Involved in the homotypic fusion of early and late endosomes. Also participates in the activation of type I interferon antiviral response through a TRIM6-dependent mechanism. This chain is Vesicle-associated membrane protein 8, found in Homo sapiens (Human).